Reading from the N-terminus, the 262-residue chain is MGRGPKKHLKRLAAPSHWMLXKLSGTYAPRPSAGPHXLRESLPLXVFLRNRLXYALCGREVKAIMMQQHVQVVGKVRTDTTYPAGFMDVITLEATNEHFRLAYDVKGKFAVHRISAEEAVYKLGKVKKVQLGKKGVPYVVTHDGRTIRYPDPLIRANDTVKIDLATGKIXSFIKFDTGRLVMVTGGRNLGRVGVIVHREKLEGGFDLVHIKDALENTFVTRLSNVFVIGTEAGKPWVSLPKGKGIKLSISEERDRRXAQQGL.

An S4 RNA-binding domain is found at leucine 42–valine 105.

This sequence belongs to the eukaryotic ribosomal protein eS4 family.

The sequence is that of Small ribosomal subunit protein eS4 (RPS4) from Candida albicans (Yeast).